The primary structure comprises 289 residues: Energy-coupling factor transporter ATP-binding protein EcfA2 (289 aa).

The ABC transporter domain maps to 3–245 (IEFKNVDYVY…QEWVKKHYLD (243 aa)). 40–47 (GHTGSGKS) is an ATP binding site.

This sequence belongs to the ABC transporter superfamily. Energy-coupling factor EcfA family. In terms of assembly, forms a stable energy-coupling factor (ECF) transporter complex composed of 2 membrane-embedded substrate-binding proteins (S component), 2 ATP-binding proteins (A component) and 2 transmembrane proteins (T component).

The protein resides in the cell membrane. Its function is as follows. ATP-binding (A) component of a common energy-coupling factor (ECF) ABC-transporter complex. Unlike classic ABC transporters this ECF transporter provides the energy necessary to transport a number of different substrates. The sequence is that of Energy-coupling factor transporter ATP-binding protein EcfA2 from Lactobacillus johnsonii (strain CNCM I-12250 / La1 / NCC 533).